The following is a 319-amino-acid chain: MMVLKVEELVTGKKKGNGDAGEFLPEDFRDGEYEAAVTLEKQEDLKTLPVHFVSLGEQQWKTEKQREAELKKKKLEQRSKLENLEDLEIIIQLKKRKKYKKTKVPVVKEPEPEIVTEPVDVPMFLKAALENKLPVIEKFLSDKNNPDVCDEYKRTALHRACLEGHLAIVEKLIEAGAQIEFRDMLESTAIHWASRGGSLDVLKLLLNKGAKISARDKLLSTPLHVAVRTGHYECAEHLIACEADLNAKDREGDTPLHDAVRLNRYKMIRLLITYGADLNVKNCAGKTPMDLVLHWQNGTKAIFDSLKENSYKASRIAAF.

The stretch at 61-89 (KTEKQREAELKKKKLEQRSKLENLEDLEI) forms a coiled coil. ANK repeat units follow at residues 152–181 (YKRT…QIEF), 185–214 (LEST…KISA), 218–247 (LLST…DLNA), 251–280 (EGDT…DLNV), and 284–315 (AGKT…KASR).

In terms of assembly, interacts with TTN/titin and YBX1.

The protein resides in the nucleus. In terms of biological role, may play an important role in endothelial cell activation. May act as a nuclear transcription factor that negatively regulates the expression of cardiac genes. The polypeptide is Ankyrin repeat domain-containing protein 1 (ANKRD1) (Bos taurus (Bovine)).